Consider the following 347-residue polypeptide: Aspartate carbamoyltransferase catalytic subunit (347 aa).

R75 and T76 together coordinate carbamoyl phosphate. Position 103 (K103) interacts with L-aspartate. Carbamoyl phosphate contacts are provided by R125, H153, and Q156. 2 residues coordinate L-aspartate: R193 and R247. G288 and P289 together coordinate carbamoyl phosphate.

It belongs to the aspartate/ornithine carbamoyltransferase superfamily. ATCase family. In terms of assembly, heterododecamer (2C3:3R2) of six catalytic PyrB chains organized as two trimers (C3), and six regulatory PyrI chains organized as three dimers (R2).

The catalysed reaction is carbamoyl phosphate + L-aspartate = N-carbamoyl-L-aspartate + phosphate + H(+). It functions in the pathway pyrimidine metabolism; UMP biosynthesis via de novo pathway; (S)-dihydroorotate from bicarbonate: step 2/3. Catalyzes the condensation of carbamoyl phosphate and aspartate to form carbamoyl aspartate and inorganic phosphate, the committed step in the de novo pyrimidine nucleotide biosynthesis pathway. The protein is Aspartate carbamoyltransferase catalytic subunit of Erythrobacter litoralis (strain HTCC2594).